The following is a 274-amino-acid chain: 4-hydroxy-3-methylbut-2-enyl diphosphate reductase (274 aa).

Cys12 is a binding site for [4Fe-4S] cluster. (2E)-4-hydroxy-3-methylbut-2-enyl diphosphate contacts are provided by His36 and His70. Dimethylallyl diphosphate contacts are provided by His36 and His70. Isopentenyl diphosphate is bound by residues His36 and His70. Residue Cys92 participates in [4Fe-4S] cluster binding. His120 is a binding site for (2E)-4-hydroxy-3-methylbut-2-enyl diphosphate. His120 lines the dimethylallyl diphosphate pocket. His120 serves as a coordination point for isopentenyl diphosphate. Glu122 acts as the Proton donor in catalysis. Thr158 provides a ligand contact to (2E)-4-hydroxy-3-methylbut-2-enyl diphosphate. Residue Cys186 participates in [4Fe-4S] cluster binding. The (2E)-4-hydroxy-3-methylbut-2-enyl diphosphate site is built by Ser214, Ser215, Asn216, and Ser258. Dimethylallyl diphosphate is bound by residues Ser214, Ser215, Asn216, and Ser258. Positions 214, 215, 216, and 258 each coordinate isopentenyl diphosphate.

This sequence belongs to the IspH family. The cofactor is [4Fe-4S] cluster.

It carries out the reaction isopentenyl diphosphate + 2 oxidized [2Fe-2S]-[ferredoxin] + H2O = (2E)-4-hydroxy-3-methylbut-2-enyl diphosphate + 2 reduced [2Fe-2S]-[ferredoxin] + 2 H(+). The enzyme catalyses dimethylallyl diphosphate + 2 oxidized [2Fe-2S]-[ferredoxin] + H2O = (2E)-4-hydroxy-3-methylbut-2-enyl diphosphate + 2 reduced [2Fe-2S]-[ferredoxin] + 2 H(+). It functions in the pathway isoprenoid biosynthesis; dimethylallyl diphosphate biosynthesis; dimethylallyl diphosphate from (2E)-4-hydroxy-3-methylbutenyl diphosphate: step 1/1. It participates in isoprenoid biosynthesis; isopentenyl diphosphate biosynthesis via DXP pathway; isopentenyl diphosphate from 1-deoxy-D-xylulose 5-phosphate: step 6/6. In terms of biological role, catalyzes the conversion of 1-hydroxy-2-methyl-2-(E)-butenyl 4-diphosphate (HMBPP) into a mixture of isopentenyl diphosphate (IPP) and dimethylallyl diphosphate (DMAPP). Acts in the terminal step of the DOXP/MEP pathway for isoprenoid precursor biosynthesis. The protein is 4-hydroxy-3-methylbut-2-enyl diphosphate reductase of Campylobacter concisus (strain 13826).